We begin with the raw amino-acid sequence, 272 residues long: Phosphatidylglycerol--prolipoprotein diacylglyceryl transferase (272 aa).

4 helical membrane passes run 15-35 (LGPL…LVLF), 53-73 (AFAV…WHVV), 94-114 (GLGF…IAKI), and 117-137 (VPPF…LCFA). A 1,2-diacyl-sn-glycero-3-phospho-(1'-sn-glycerol) is bound at residue R138. 3 helical membrane passes run 174–194 (FHPI…ILLV), 199–219 (VFVK…VLYG), and 237–257 (FGLD…VLIA).

It belongs to the Lgt family.

It is found in the cell membrane. The catalysed reaction is L-cysteinyl-[prolipoprotein] + a 1,2-diacyl-sn-glycero-3-phospho-(1'-sn-glycerol) = an S-1,2-diacyl-sn-glyceryl-L-cysteinyl-[prolipoprotein] + sn-glycerol 1-phosphate + H(+). The protein operates within protein modification; lipoprotein biosynthesis (diacylglyceryl transfer). Its function is as follows. Catalyzes the transfer of the diacylglyceryl group from phosphatidylglycerol to the sulfhydryl group of the N-terminal cysteine of a prolipoprotein, the first step in the formation of mature lipoproteins. The polypeptide is Phosphatidylglycerol--prolipoprotein diacylglyceryl transferase (Tropheryma whipplei (strain TW08/27) (Whipple's bacillus)).